The primary structure comprises 544 residues: Chaperonin GroEL 2 (544 aa).

ATP contacts are provided by residues 29–32 (TLGP), 86–90 (DGTTT), Gly413, 482–484 (NVL), and Asp498.

It belongs to the chaperonin (HSP60) family. As to quaternary structure, forms a cylinder of 14 subunits composed of two heptameric rings stacked back-to-back. Interacts with the co-chaperonin GroES.

Its subcellular location is the cytoplasm. It carries out the reaction ATP + H2O + a folded polypeptide = ADP + phosphate + an unfolded polypeptide.. Its function is as follows. Together with its co-chaperonin GroES, plays an essential role in assisting protein folding. The GroEL-GroES system forms a nano-cage that allows encapsulation of the non-native substrate proteins and provides a physical environment optimized to promote and accelerate protein folding. This Roseiflexus sp. (strain RS-1) protein is Chaperonin GroEL 2.